We begin with the raw amino-acid sequence, 313 residues long: D-alanine--D-alanine ligase (313 aa).

Positions 108–308 (KLVWQQLGIP…YQELVVGVLA (201 aa)) constitute an ATP-grasp domain. 138 to 193 (VAKLGLPLFVKPASEGSSVAVIKVKSADALPAALIEAVKYDKIVVVEKSVEGGGEY) lines the ATP pocket. Mg(2+) contacts are provided by aspartate 262, glutamate 275, and asparagine 277.

This sequence belongs to the D-alanine--D-alanine ligase family. Mg(2+) is required as a cofactor. The cofactor is Mn(2+).

Its subcellular location is the cytoplasm. It catalyses the reaction 2 D-alanine + ATP = D-alanyl-D-alanine + ADP + phosphate + H(+). Its pathway is cell wall biogenesis; peptidoglycan biosynthesis. Functionally, cell wall formation. This Paraburkholderia phytofirmans (strain DSM 17436 / LMG 22146 / PsJN) (Burkholderia phytofirmans) protein is D-alanine--D-alanine ligase.